The following is a 374-amino-acid chain: MIFQTTSEDTLTKARTGILNLNGIELKTPVFMPVGTRGVVKTLSADDLEELEYSLILGNTYHLYLRPGTSVLDRFGGLKKFSTWKKALLTDSGGYQVFSLNSLFKYEQDGVRFQSHIDGSRHYFTPNSVIDIQRSIGSDIMMVLDDCAPFDSGPERLKQSLDRTHRWAEMSVQYWEKNKNSQHLFGIFQGGIDLDFRLESLNTITSLPFDGIAIGGLSVGEPRKDFIRILDGISAHTDRNRPLYLMGVGTVPDILDGVKNGVDMFDCVLPTRNARNGQVFTTLGKINLRNEKWKSSDTPMDPNCTCKVCKRYSIGYIRHLHHVGEITAFSLSTYHNLHFMKNFLTEIQNSIQKGEFLEIYAKWKNLYEKPEFSG.

Asp-91 functions as the Proton acceptor in the catalytic mechanism. Residues 91–95, Asp-145, Gln-189, and Gly-216 each bind substrate; that span reads DSGGY. Positions 247 to 253 are RNA binding; the sequence is GVGTVPD. Residue Asp-266 is the Nucleophile of the active site. Residues 271–275 are RNA binding; important for wobble base 34 recognition; it reads TRNAR. Zn(2+) is bound by residues Cys-304, Cys-306, Cys-309, and His-335.

The protein belongs to the queuine tRNA-ribosyltransferase family. Homodimer. Within each dimer, one monomer is responsible for RNA recognition and catalysis, while the other monomer binds to the replacement base PreQ1. Requires Zn(2+) as cofactor.

It catalyses the reaction 7-aminomethyl-7-carbaguanine + guanosine(34) in tRNA = 7-aminomethyl-7-carbaguanosine(34) in tRNA + guanine. The protein operates within tRNA modification; tRNA-queuosine biosynthesis. Its function is as follows. Catalyzes the base-exchange of a guanine (G) residue with the queuine precursor 7-aminomethyl-7-deazaguanine (PreQ1) at position 34 (anticodon wobble position) in tRNAs with GU(N) anticodons (tRNA-Asp, -Asn, -His and -Tyr). Catalysis occurs through a double-displacement mechanism. The nucleophile active site attacks the C1' of nucleotide 34 to detach the guanine base from the RNA, forming a covalent enzyme-RNA intermediate. The proton acceptor active site deprotonates the incoming PreQ1, allowing a nucleophilic attack on the C1' of the ribose to form the product. After dissociation, two additional enzymatic reactions on the tRNA convert PreQ1 to queuine (Q), resulting in the hypermodified nucleoside queuosine (7-(((4,5-cis-dihydroxy-2-cyclopenten-1-yl)amino)methyl)-7-deazaguanosine). The chain is Queuine tRNA-ribosyltransferase from Leptospira interrogans serogroup Icterohaemorrhagiae serovar Lai (strain 56601).